The primary structure comprises 511 residues: Inner membrane ABC transporter permease protein YnjC (511 aa).

Residues 1–8 (MATPLRYA) lie on the Cytoplasmic side of the membrane. A helical transmembrane segment spans residues 9 to 29 (LIFLLWAMVAVIYAPLIPAAL). Topologically, residues 30 to 62 (TLISPALSLTHWQALFADPQLPQALLATLVSTT) are periplasmic. An ABC transmembrane type-1 1 domain is found at 54 to 255 (LLATLVSTTI…MLLLAAYVLL (202 aa)). A helical membrane pass occupies residues 63 to 83 (IAAVGALLIALLVIVALWPGP). The Cytoplasmic portion of the chain corresponds to 84–91 (KWQRMCAR). The helical transmembrane segment at 92-112 (LPWLLAIPHVAFATSALLLFA) threads the bilayer. The Periplasmic segment spans residues 113-130 (DGGLLYDYFPYFTPPMDR). A helical membrane pass occupies residues 131–151 (FGIGLGLTLAVKESAFLLWIL). The Cytoplasmic segment spans residues 152–189 (AAVLSEKWLLQQVIVLDSLGYSRWQCLNWLLLPSVAPA). Residues 190–210 (LAMAMLAIVAWSLSVVDVAII) form a helical membrane-spanning segment. Over 211 to 239 (LGPGNPPTLAVISWQWLTQGDIDQQTKGA) the chain is Periplasmic. Residues 240–260 (LASLLLMLLLAAYVLLSYLLW) form a helical membrane-spanning segment. Over 261–284 (RSWRRTIPRVDGVRKPATPLLPGN) the chain is Cytoplasmic. The chain crosses the membrane as a helical span at residues 285 to 305 (TLAIFLPLTGVLCVVLLAILA). Residues 306 to 318 (DQSTINSEALINS) lie on the Periplasmic side of the membrane. Residues 315–496 (LINSLTMGLV…LLPLIIFALT (182 aa)) form the ABC transmembrane type-1 2 domain. Residues 319-339 (LTMGLVATFIALLLLLLWLEW) form a helical membrane-spanning segment. The Cytoplasmic segment spans residues 340-345 (GPQRRQ). A helical membrane pass occupies residues 346 to 366 (LWLWLPILLPALPLVAGQYTL). At 367 to 374 (ALWLKLDG) the chain is on the periplasmic side. The chain crosses the membrane as a helical span at residues 375 to 395 (SWTAVVWGHLLWVMPWMLFIL). Topologically, residues 396 to 432 (QPAWQRIDSRLILIAQTLGWSRAKIFFYVKCPLMLRP) are cytoplasmic. Residues 433 to 453 (VLIAFAVGFAVGIAQYMPTLW) form a helical membrane-spanning segment. The Periplasmic segment spans residues 454-485 (LGAGRFPTLTTEAVALSSGGSNGILAAQALWQ). A helical transmembrane segment spans residues 486–506 (LLLPLIIFALTALVAKWVGYV). The Cytoplasmic portion of the chain corresponds to 507-511 (RQGLR).

The protein belongs to the binding-protein-dependent transport system permease family.

It localises to the cell inner membrane. Its function is as follows. Probably part of the binding-protein-dependent transport system YnjCD. Probably responsible for the translocation of the substrate across the membrane. In Escherichia coli (strain K12), this protein is Inner membrane ABC transporter permease protein YnjC (ynjC).